The sequence spans 345 residues: Uroporphyrinogen decarboxylase (345 aa).

Substrate is bound by residues 27–31 (RQAGR), F46, D76, Y152, S207, and H320.

The protein belongs to the uroporphyrinogen decarboxylase family. Homodimer.

Its subcellular location is the cytoplasm. It carries out the reaction uroporphyrinogen III + 4 H(+) = coproporphyrinogen III + 4 CO2. The protein operates within porphyrin-containing compound metabolism; protoporphyrin-IX biosynthesis; coproporphyrinogen-III from 5-aminolevulinate: step 4/4. Functionally, catalyzes the decarboxylation of four acetate groups of uroporphyrinogen-III to yield coproporphyrinogen-III. The protein is Uroporphyrinogen decarboxylase of Oceanobacillus iheyensis (strain DSM 14371 / CIP 107618 / JCM 11309 / KCTC 3954 / HTE831).